Consider the following 183-residue polypeptide: Putative 3-methyladenine DNA glycosylase (183 aa).

The protein belongs to the DNA glycosylase MPG family.

The polypeptide is Putative 3-methyladenine DNA glycosylase (Wolbachia pipientis subsp. Culex pipiens (strain wPip)).